Reading from the N-terminus, the 189-residue chain is Large ribosomal subunit protein bL9 (189 aa).

The protein belongs to the bacterial ribosomal protein bL9 family.

Its function is as follows. Binds to the 23S rRNA. This is Large ribosomal subunit protein bL9 from Cereibacter sphaeroides (strain ATCC 17023 / DSM 158 / JCM 6121 / CCUG 31486 / LMG 2827 / NBRC 12203 / NCIMB 8253 / ATH 2.4.1.) (Rhodobacter sphaeroides).